A 180-amino-acid chain; its full sequence is MIIVISGPPGSGKSTVAKILSKNLSLKYISAGHIFRELAEKEGLSLLELNKKAEENFEIDKKIDREIFRIASTEKNIIIESHIGGWLLKDIADITVYLNASIEIRAMRIAKRDNIPFTKAIEQIIEREESHSRRFLAYYGIDLSDLSVFDLVINTDNLQPDEISKIIEAYLNFMLAKNIH.

ATP is bound at residue 7–15; sequence GPPGSGKST.

It belongs to the cytidylate kinase family. Type 2 subfamily.

The protein resides in the cytoplasm. The catalysed reaction is CMP + ATP = CDP + ADP. It catalyses the reaction dCMP + ATP = dCDP + ADP. The sequence is that of Cytidylate kinase from Sulfurisphaera tokodaii (strain DSM 16993 / JCM 10545 / NBRC 100140 / 7) (Sulfolobus tokodaii).